A 203-amino-acid polypeptide reads, in one-letter code: High frequency lysogenization protein HflD homolog (203 aa).

Belongs to the HflD family.

It localises to the cytoplasm. It is found in the cell inner membrane. In Aeromonas salmonicida (strain A449), this protein is High frequency lysogenization protein HflD homolog.